A 272-amino-acid polypeptide reads, in one-letter code: Indole-3-glycerol phosphate synthase (272 aa).

Belongs to the TrpC family.

The enzyme catalyses 1-(2-carboxyphenylamino)-1-deoxy-D-ribulose 5-phosphate + H(+) = (1S,2R)-1-C-(indol-3-yl)glycerol 3-phosphate + CO2 + H2O. It participates in amino-acid biosynthesis; L-tryptophan biosynthesis; L-tryptophan from chorismate: step 4/5. The chain is Indole-3-glycerol phosphate synthase from Mycobacterium sp. (strain JLS).